A 366-amino-acid polypeptide reads, in one-letter code: GDSL esterase/lipase LTL1 (366 aa).

Residues 1–27 form the signal peptide; sequence MNINCSPLGFLISLFFIVTFLAPQVKS. Serine 36 acts as the Nucleophile in catalysis. The N-linked (GlcNAc...) asparagine glycan is linked to asparagine 117. Residues aspartate 326 and histidine 329 contribute to the active site. Asparagine 354 carries an N-linked (GlcNAc...) asparagine glycan.

This sequence belongs to the 'GDSL' lipolytic enzyme family. In terms of assembly, binds to VLG at the endomembrane system. Mostly expressed in flowers, reproductive stems and rosette leaves, and, to a lower extent, in roots.

The protein localises to the secreted. Involved in the mechanisms of salt tolerance. Mediates resistance to LiCl and NaCl. The sequence is that of GDSL esterase/lipase LTL1 from Arabidopsis thaliana (Mouse-ear cress).